The following is a 324-amino-acid chain: tRNA uridine(34) hydroxylase (324 aa).

A Rhodanese domain is found at 145 to 239 (NDKKTIFIDM…YVHDARKNGL (95 aa)). Cysteine 199 (cysteine persulfide intermediate) is an active-site residue.

Belongs to the TrhO family.

The enzyme catalyses uridine(34) in tRNA + AH2 + O2 = 5-hydroxyuridine(34) in tRNA + A + H2O. Its function is as follows. Catalyzes oxygen-dependent 5-hydroxyuridine (ho5U) modification at position 34 in tRNAs. This Buchnera aphidicola subsp. Acyrthosiphon pisum (strain APS) (Acyrthosiphon pisum symbiotic bacterium) protein is tRNA uridine(34) hydroxylase.